We begin with the raw amino-acid sequence, 310 residues long: 2-dehydropantoate 2-reductase (310 aa).

NADP(+) contacts are provided by residues 9–14 (GVGAIG) and Asn-100. Asn-100 is a binding site for substrate. Catalysis depends on Lys-184, which acts as the Proton donor. Asn-188, Asn-192, and Ser-259 together coordinate substrate. Glu-270 provides a ligand contact to NADP(+).

This sequence belongs to the ketopantoate reductase family.

Its subcellular location is the cytoplasm. The catalysed reaction is (R)-pantoate + NADP(+) = 2-dehydropantoate + NADPH + H(+). Its pathway is cofactor biosynthesis; (R)-pantothenate biosynthesis; (R)-pantoate from 3-methyl-2-oxobutanoate: step 2/2. Functionally, catalyzes the NADPH-dependent reduction of ketopantoate into pantoic acid. The sequence is that of 2-dehydropantoate 2-reductase from Aquifex aeolicus (strain VF5).